A 147-amino-acid polypeptide reads, in one-letter code: UPF0306 protein YhbP (147 aa).

Belongs to the UPF0306 family.

The sequence is that of UPF0306 protein YhbP from Escherichia coli O8 (strain IAI1).